Consider the following 1122-residue polypeptide: Angiopoietin-1 receptor (1122 aa).

Residues 1-22 (MDSLAGLVLCGVSLLLYGVVEG) form the signal peptide. Residues 23-746 (AMDLILINSL…SADLGGGKML (724 aa)) lie on the Extracellular side of the membrane. Cys-44 and Cys-102 are joined by a disulfide. Positions 44 to 123 (CIASGWHPHE…RTMKMRQQAS (80 aa)) constitute an Ig-like C2-type 1 domain. N-linked (GlcNAc...) asparagine glycosylation is found at Asn-140 and Asn-158. 3 consecutive EGF-like domains span residues 210 to 252 (RCEA…RTCE), 254 to 299 (ACEP…LQCN), and 301 to 341 (ACPS…LQCE). Disulfide bonds link Cys-211–Cys-220, Cys-224–Cys-233, Cys-227–Cys-240, Cys-242–Cys-251, Cys-255–Cys-264, Cys-268–Cys-274, Cys-280–Cys-287, Cys-289–Cys-298, Cys-302–Cys-311, Cys-315–Cys-323, Cys-317–Cys-329, Cys-331–Cys-340, and Cys-370–Cys-424. The Ig-like C2-type 2 domain occupies 350 to 440 (PQIEDLPDHI…GMVEKPFNIS (91 aa)). Asn-399, Asn-438, Asn-464, Asn-558, Asn-595, Asn-648, and Asn-690 each carry an N-linked (GlcNAc...) asparagine glycan. Fibronectin type-III domains follow at residues 444-539 (LPEP…TASI), 543-635 (PPRG…TLSD), and 640-733 (QPEN…TLPH). Residues 747–767 (LIAILGSAGMTCITVLLAFLI) form a helical membrane-spanning segment. Topologically, residues 768–1122 (MLQLKRANVQ…GIDCSAEEAA (355 aa)) are cytoplasmic. The Protein kinase domain occupies 822–1094 (IKFQDVIGEG…QILVSLNRML (273 aa)). ATP-binding positions include 828 to 836 (IGEGNFGQV) and Lys-853. Position 858 is a phosphotyrosine; by autocatalysis (Tyr-858). Asp-962 serves as the catalytic Proton acceptor. A phosphotyrosine; by autocatalysis mark is found at Tyr-990, Tyr-1100, and Tyr-1106.

It belongs to the protein kinase superfamily. Tyr protein kinase family. Tie subfamily. As to quaternary structure, homodimer. Heterodimer with TIE1. Interacts with ANGPT1, ANGPT2 and ANGPT4. At cell-cell contacts in quiescent cells, forms a signaling complex composed of ANGPT1 plus TEK molecules from two adjoining cells. In the absence of endothelial cell-cell contacts, interaction with ANGPT1 mediates contacts with the extracellular matrix. Interacts (tyrosine phosphorylated) with TNIP2. Interacts (tyrosine phosphorylated) with SHC1 (via SH2 domain). Interacts with PTPRB; this promotes endothelial cell-cell adhesion. Interacts with DOK2, GRB2, GRB7, GRB14, PIK3R1 and PTPN11/SHP2. Colocalizes with DOK2 at contacts with the extracellular matrix in migrating cells. Proteolytic processing leads to the shedding of the extracellular domain (soluble TIE-2 alias sTIE-2). Post-translationally, autophosphorylated on tyrosine residues in response to ligand binding. Autophosphorylation occurs in trans, i.e. one subunit of the dimeric receptor phosphorylates tyrosine residues on the other subunit. Autophosphorylation occurs in a sequential manner, where Tyr-990 in the kinase activation loop is phosphorylated first, followed by autophosphorylation at Tyr-1106 and at additional tyrosine residues. ANGPT1-induced phosphorylation is impaired during hypoxia, due to increased expression of ANGPT2. Phosphorylation is important for interaction with GRB14, PIK3R1 and PTPN11. Phosphorylation at Tyr-1100 is important for interaction with GRB2 and GRB7. Phosphorylation at Tyr-1106 is important for interaction with DOK2 and for coupling to downstream signal transduction pathways in endothelial cells. Dephosphorylated by PTPRB. In terms of processing, ubiquitinated. The phosphorylated receptor is ubiquitinated and internalized, leading to its degradation. Specifically expressed in developing vascular endothelial cells. Abundantly expressed in lung and heart, moderately in brain, liver and kidney, and weakly in thymus, spleen and testis.

Its subcellular location is the cell membrane. It localises to the cell junction. It is found in the focal adhesion. The protein resides in the cytoplasm. The protein localises to the cytoskeleton. Its subcellular location is the secreted. The enzyme catalyses L-tyrosyl-[protein] + ATP = O-phospho-L-tyrosyl-[protein] + ADP + H(+). Its activity is regulated as follows. Angiopoietin binding leads to receptor dimerization and activation by autophosphorylation at Tyr-990 on the kinase activation loop. Its function is as follows. Tyrosine-protein kinase that acts as a cell-surface receptor for ANGPT1, ANGPT2 and ANGPT4 and regulates angiogenesis, endothelial cell survival, proliferation, migration, adhesion and cell spreading, reorganization of the actin cytoskeleton, but also maintenance of vascular quiescence. Has anti-inflammatory effects by preventing the leakage of pro-inflammatory plasma proteins and leukocytes from blood vessels. Required for normal angiogenesis and heart development during embryogenesis. Required for postnatal hematopoiesis. After birth, activates or inhibits angiogenesis, depending on the context. Inhibits angiogenesis and promotes vascular stability in quiescent vessels, where endothelial cells have tight contacts. In quiescent vessels, ANGPT1 oligomers recruit TEK to cell-cell contacts, forming complexes with TEK molecules from adjoining cells, and this leads to preferential activation of phosphatidylinositol 3-kinase and the AKT1 signaling cascades. In migrating endothelial cells that lack cell-cell adhesions, ANGT1 recruits TEK to contacts with the extracellular matrix, leading to the formation of focal adhesion complexes, activation of PTK2/FAK and of the downstream kinases MAPK1/ERK2 and MAPK3/ERK1, and ultimately to the stimulation of sprouting angiogenesis. ANGPT1 signaling triggers receptor dimerization and autophosphorylation at specific tyrosine residues that then serve as binding sites for scaffold proteins and effectors. Signaling is modulated by ANGPT2 that has lower affinity for TEK, can promote TEK autophosphorylation in the absence of ANGPT1, but inhibits ANGPT1-mediated signaling by competing for the same binding site. Signaling is also modulated by formation of heterodimers with TIE1, and by proteolytic processing that gives rise to a soluble TEK extracellular domain. The soluble extracellular domain modulates signaling by functioning as decoy receptor for angiopoietins. TEK phosphorylates DOK2, GRB7, GRB14, PIK3R1, SHC1 and TIE1. The sequence is that of Angiopoietin-1 receptor (Tek) from Mus musculus (Mouse).